Here is a 727-residue protein sequence, read N- to C-terminus: Protein edg-1 (727 aa).

The tract at residues 703-727 (FAESSVKPTTSSAYGNSSNFSRYAD) is disordered.

In terms of assembly, may interact with deps-1 and prg-1.

The protein resides in the cytoplasmic granule. Functionally, plays a role in regulating deps-1 cluster formation in the germline. This is Protein edg-1 from Caenorhabditis elegans.